Here is a 388-residue protein sequence, read N- to C-terminus: tRNA(Ile)-lysidine synthase (388 aa).

An ATP-binding site is contributed by 51-56; sequence SGGRDS.

Belongs to the tRNA(Ile)-lysidine synthase family.

The protein resides in the cytoplasm. It catalyses the reaction cytidine(34) in tRNA(Ile2) + L-lysine + ATP = lysidine(34) in tRNA(Ile2) + AMP + diphosphate + H(+). Its function is as follows. Ligates lysine onto the cytidine present at position 34 of the AUA codon-specific tRNA(Ile) that contains the anticodon CAU, in an ATP-dependent manner. Cytidine is converted to lysidine, thus changing the amino acid specificity of the tRNA from methionine to isoleucine. In Bifidobacterium longum subsp. infantis (strain ATCC 15697 / DSM 20088 / JCM 1222 / NCTC 11817 / S12), this protein is tRNA(Ile)-lysidine synthase.